Here is a 627-residue protein sequence, read N- to C-terminus: Carene synthase 3, chloroplastic (627 aa).

A chloroplast-targeting transit peptide spans 1-36 (MSVISIVPLASKSCLYKSLMSSTHELKALCRPIATL). Positions 378, 382, and 530 each coordinate Mg(2+). A DDXXD motif motif is present at residues 378–382 (DDMYD).

The protein belongs to the terpene synthase family. Tpsd subfamily. Mg(2+) is required as a cofactor. Mn(2+) serves as cofactor.

It localises to the plastid. Its subcellular location is the chloroplast. The catalysed reaction is (2E)-geranyl diphosphate = (+)-car-3-ene + diphosphate. The protein operates within terpene metabolism; oleoresin biosynthesis. Its function is as follows. Terpene synthase (TPS) involved in defensive oleoresin formation in conifers in response to insect attack or other injury. In Picea sitchensis (Sitka spruce), this protein is Carene synthase 3, chloroplastic (TPS-3car3).